The following is a 498-amino-acid chain: Cytotardin (498 aa).

The coil 1A stretch occupies residues Asp18–Glu58. The IF rod domain occupies Ser22–Leu378. Residues Gln59–Ser69 are linker 1. The segment at Lys70–Arg213 is coil 1B. Residues Gln214–Lys231 form a linker 2 region. The coil 2 stretch occupies residues Leu232–Leu371. Residues Asp381–Thr425 form a disordered region. The segment covering Gly393 to Gly409 has biased composition (gly residues).

Belongs to the intermediate filament family.

The protein localises to the cytoplasm. It localises to the cell cortex. In terms of biological role, intermediate filament (IF) protein that forms both short filaments and extensive cytoskeletal networks which most likely are homomeric. Some of the cytotardin arrays display cage-like perinuclear structures, while others are located in the periphery close to the cell membrane. The entire tardigrade body is ensheathed by a grid of belt-like filaments formed by the cytotardin protein, which retain their integrity even in contracted specimens. The belt-like structures encircling each epidermal cell might help to resist the shearing forces that arise during freezing and thawing cycles, whereas the dense meshwork at the basis of each claw and around the stylets might provide the tissue stability necessary for locomotion and feeding. This is Cytotardin from Hypsibius exemplaris (Freshwater tardigrade).